We begin with the raw amino-acid sequence, 168 residues long: uncharacterized protein (168 aa).

Its subcellular location is the mitochondrion. This is an uncharacterized protein from Marchantia polymorpha (Common liverwort).